We begin with the raw amino-acid sequence, 295 residues long: Acetylglutamate kinase (295 aa).

Substrate-binding positions include 66 to 67, R88, and N193; that span reads GG.

Belongs to the acetylglutamate kinase family. ArgB subfamily.

Its subcellular location is the cytoplasm. The catalysed reaction is N-acetyl-L-glutamate + ATP = N-acetyl-L-glutamyl 5-phosphate + ADP. The protein operates within amino-acid biosynthesis; L-arginine biosynthesis; N(2)-acetyl-L-ornithine from L-glutamate: step 2/4. In terms of biological role, catalyzes the ATP-dependent phosphorylation of N-acetyl-L-glutamate. The protein is Acetylglutamate kinase of Rhizobium leguminosarum bv. trifolii (strain WSM2304).